We begin with the raw amino-acid sequence, 171 residues long: GTP-dependent dephospho-CoA kinase (171 aa).

Positions 49, 51, 68, and 122 each coordinate GTP.

The protein belongs to the GTP-dependent DPCK family.

The catalysed reaction is 3'-dephospho-CoA + GTP = GDP + CoA + H(+). It functions in the pathway cofactor biosynthesis; coenzyme A biosynthesis. Functionally, catalyzes the GTP-dependent phosphorylation of the 3'-hydroxyl group of dephosphocoenzyme A to form coenzyme A (CoA). The protein is GTP-dependent dephospho-CoA kinase of Hyperthermus butylicus (strain DSM 5456 / JCM 9403 / PLM1-5).